We begin with the raw amino-acid sequence, 135 residues long: Small ribosomal subunit protein uS9 (135 aa).

It belongs to the universal ribosomal protein uS9 family.

This chain is Small ribosomal subunit protein uS9, found in Petrotoga mobilis (strain DSM 10674 / SJ95).